The chain runs to 637 residues: tRNA 5-methylaminomethyl-2-thiouridine biosynthesis bifunctional protein MnmC (637 aa).

The tract at residues 1–231 (MPIDPARLAF…KRQMCRGRHR (231 aa)) is tRNA (mnm(5)s(2)U34)-methyltransferase. The tract at residues 250 to 637 (IGAGLAGSST…RPARGMTREG (388 aa)) is FAD-dependent cmnm(5)s(2)U34 oxidoreductase.

In the N-terminal section; belongs to the methyltransferase superfamily. tRNA (mnm(5)s(2)U34)-methyltransferase family. It in the C-terminal section; belongs to the DAO family. Requires FAD as cofactor.

It is found in the cytoplasm. It catalyses the reaction 5-aminomethyl-2-thiouridine(34) in tRNA + S-adenosyl-L-methionine = 5-methylaminomethyl-2-thiouridine(34) in tRNA + S-adenosyl-L-homocysteine + H(+). Functionally, catalyzes the last two steps in the biosynthesis of 5-methylaminomethyl-2-thiouridine (mnm(5)s(2)U) at the wobble position (U34) in tRNA. Catalyzes the FAD-dependent demodification of cmnm(5)s(2)U34 to nm(5)s(2)U34, followed by the transfer of a methyl group from S-adenosyl-L-methionine to nm(5)s(2)U34, to form mnm(5)s(2)U34. The polypeptide is tRNA 5-methylaminomethyl-2-thiouridine biosynthesis bifunctional protein MnmC (Aromatoleum aromaticum (strain DSM 19018 / LMG 30748 / EbN1) (Azoarcus sp. (strain EbN1))).